Here is a 72-residue protein sequence, read N- to C-terminus: Putative beta-neurotoxin (72 aa).

An N-terminal signal peptide occupies residues 1–7; sequence IDMVVEC. The 63-residue stretch at 9–71 folds into the LCN-type CS-alpha/beta domain; that stretch reads KDGYLMEHDG…TWSRATNRCG (63 aa). Intrachain disulfides connect Cys19/Cys70, Cys23/Cys45, Cys31/Cys51, and Cys35/Cys53.

As to expression, expressed by the venom gland.

The protein resides in the secreted. Functionally, beta toxins bind voltage-independently at site-4 of sodium channels (Nav) and shift the voltage of activation toward more negative potentials thereby affecting sodium channel activation and promoting spontaneous and repetitive firing. This is Putative beta-neurotoxin from Tityus pachyurus (Colombian scorpion).